The following is a 170-amino-acid chain: Probable inactive uracil-DNA glycosylase, mitochondrial (170 aa).

The N-terminal 53 residues, 1–53 (MALSTPKTLMDFFQPAKRLKASPSSSSSFPAVSVAGRSRDLGSVANSPPRVTV), are a transit peptide targeting the mitochondrion.

This sequence belongs to the uracil-DNA glycosylase (UDG) superfamily. UNG family.

The protein resides in the mitochondrion. Functionally, probable inactive paralog of AtUNG (AC Q9LIH6) generated by a gene duplication event and subsequently disrupted by at least two transposon insertions. The protein is Probable inactive uracil-DNA glycosylase, mitochondrial of Arabidopsis thaliana (Mouse-ear cress).